Reading from the N-terminus, the 141-residue chain is uncharacterized protein (141 aa).

2 consecutive transmembrane segments (helical) span residues 20 to 42 (FLVN…FCLA) and 52 to 74 (LHLC…IFTL).

Its subcellular location is the cell membrane. This is an uncharacterized protein from Archaeoglobus fulgidus (strain ATCC 49558 / DSM 4304 / JCM 9628 / NBRC 100126 / VC-16).